The following is a 431-amino-acid chain: Adenylosuccinate synthetase (431 aa).

Residues 13–19 (GDEGKGK) and 41–43 (GHT) contribute to the GTP site. The Proton acceptor role is filled by Asp14. Mg(2+)-binding residues include Asp14 and Gly41. Residues 14 to 17 (DEGK), 39 to 42 (NAGH), Thr130, Arg144, Gln225, Thr240, and Arg304 contribute to the IMP site. The Proton donor role is filled by His42. 300 to 306 (ATTGRKR) contributes to the substrate binding site. Residues Arg306, 332 to 334 (KLD), and 415 to 417 (STG) each bind GTP.

Belongs to the adenylosuccinate synthetase family. As to quaternary structure, homodimer. It depends on Mg(2+) as a cofactor.

It is found in the cytoplasm. It catalyses the reaction IMP + L-aspartate + GTP = N(6)-(1,2-dicarboxyethyl)-AMP + GDP + phosphate + 2 H(+). The protein operates within purine metabolism; AMP biosynthesis via de novo pathway; AMP from IMP: step 1/2. Its function is as follows. Plays an important role in the de novo pathway of purine nucleotide biosynthesis. Catalyzes the first committed step in the biosynthesis of AMP from IMP. The chain is Adenylosuccinate synthetase from Shewanella frigidimarina (strain NCIMB 400).